A 364-amino-acid polypeptide reads, in one-letter code: Phenylalanine dehydrogenase (364 aa).

Arg-62 is a binding site for NAD(+). Lys-86 lines the L-phenylalanine pocket. Lys-98 serves as the catalytic Proton donor/acceptor. Residues Asp-133, Ser-164, Thr-168, 255–256, and 276–278 each bind NAD(+); these read AM and AAN. An L-phenylalanine-binding site is contributed by Asn-278.

Belongs to the Glu/Leu/Phe/Val dehydrogenases family.

The enzyme catalyses L-phenylalanine + NAD(+) + H2O = 3-phenylpyruvate + NH4(+) + NADH + H(+). It functions in the pathway amino-acid biosynthesis; L-phenylalanine biosynthesis; L-phenylalanine from phenylpyruvate (PDH route): step 1/1. Its function is as follows. Catalyzes the reversible NAD(+)-dependent oxidative deamination of L-phenylalanine to phenylpyruvate. This is Phenylalanine dehydrogenase from Rhodococcus jostii (strain RHA1).